We begin with the raw amino-acid sequence, 271 residues long: Putative hydro-lyase OCAR_7359/OCA5_c07590 (271 aa).

This sequence belongs to the D-glutamate cyclase family.

In Afipia carboxidovorans (strain ATCC 49405 / DSM 1227 / KCTC 32145 / OM5) (Oligotropha carboxidovorans), this protein is Putative hydro-lyase OCAR_7359/OCA5_c07590.